The following is a 949-amino-acid chain: Piwi-like protein 2 (949 aa).

The segment at 1-125 (MDPTRPPFRG…SLSTRVQQAS (125 aa)) is disordered. A compositionally biased stretch (polar residues) spans 115–125 (PSLSTRVQQAS). A PAZ domain is found at 366–478 (SVLDIMNILY…LLPELAFMTG (113 aa)). Residues 644 to 935 (LLVCLISGTR…LAFLSGQFLH (292 aa)) enclose the Piwi domain. Active-site residues include D721, E759, D791, and H924.

It belongs to the argonaute family. Piwi subfamily. As to quaternary structure, component of the PET complex. Mg(2+) is required as a cofactor. In terms of processing, methylated on arginine residues; required for the interaction with Tudor domain-containing protein and subsequent localization to the meiotic nuage, also named P granule. As to expression, expressed in oocytes, testis and liver (at protein level).

It localises to the cytoplasm. Its subcellular location is the nucleus. Its function is as follows. Endoribonuclease that plays a central role during spermatogenesis by repressing transposable elements and preventing their mobilization, which is essential for the germline integrity. Plays an essential role in meiotic differentiation of spermatocytes, germ cell differentiation and in self-renewal of spermatogonial stem cells. Acts via the piRNA metabolic process, which mediates the repression of transposable elements during meiosis by forming complexes composed of piRNAs and Piwi proteins and govern the methylation and subsequent repression of transposons. During piRNA biosynthesis, plays a key role in the piRNA amplification loop, also named ping-pong amplification cycle, by acting as a 'slicer-competent' piRNA endoribonuclease that cleaves primary piRNAs, which are then loaded onto 'slicer-incompetent' piwil4. Piwil2 slicing produces a pre-miRNA intermediate, which is then processed in mature piRNAs, and as well as a 16 nucleotide by-product that is degraded. Required for piwil4/miwi2 nuclear localization and association with secondary piRNAs antisense. Represses circadian rhythms by promoting the stability and activity of core clock components BMAL1 and CLOCK. This chain is Piwi-like protein 2 (piwil2), found in Xenopus tropicalis (Western clawed frog).